The chain runs to 377 residues: Geranylgeranyl transferase type-1 subunit beta (377 aa).

PFTB repeat units lie at residues 144–186 (KEAC…YMLN), 193–234 (MKKA…CLMG), 245–284 (LNRIKRWCIMRQQNGYHGRPNKPVDTCYSFWVGATLKLLK), and 291–333 (FEKN…SLME). Geranylgeranyl diphosphate is bound by residues 219–221 (HGG) and 263–266 (RPNK). Residues Asp-269 and Cys-271 each contribute to the Zn(2+) site. 272–275 (YSFW) is a geranylgeranyl diphosphate binding site. His-321 contacts Zn(2+).

It belongs to the protein prenyltransferase subunit beta family. In terms of assembly, heterodimer of FNTA and PGGT1B. PGGT1B mediates interaction with substrate peptides. Requires Zn(2+) as cofactor. It depends on Mg(2+) as a cofactor.

It carries out the reaction geranylgeranyl diphosphate + L-cysteinyl-[protein] = S-geranylgeranyl-L-cysteinyl-[protein] + diphosphate. In terms of biological role, catalyzes the transfer of a geranyl-geranyl moiety from geranyl-geranyl pyrophosphate to a cysteine at the fourth position from the C-terminus of proteins having the C-terminal sequence Cys-aliphatic-aliphatic-X. Known substrates include RAC1, RAC2, RAP1A and RAP1B. This Homo sapiens (Human) protein is Geranylgeranyl transferase type-1 subunit beta (PGGT1B).